A 221-amino-acid chain; its full sequence is MVGSGVGGVDKVVQPSLKWEGSLWQQGMRRVAGVDEVGRGALAGPVVAAAVILPAHLDPEALSGVRDCKQLRPPQRAHWAERIAQVALAVGIGSASAAEIDQLNIRQATLLAMQRALAQVGEVEHILLDGLPLAELGSRQTALVKGDQLSLSIAAASIVAKVWRDTLMQSWDHQYPGYGWRTNVGYGTQEHRLALQRLGPSPQHRRSFAPLRDLQAGEIGG.

The RNase H type-2 domain occupies 29-220 (RRVAGVDEVG…LRDLQAGEIG (192 aa)). A divalent metal cation-binding residues include Asp-35, Glu-36, and Asp-129. Positions 198–221 (LGPSPQHRRSFAPLRDLQAGEIGG) are disordered.

Belongs to the RNase HII family. Mn(2+) serves as cofactor. Mg(2+) is required as a cofactor.

It is found in the cytoplasm. It carries out the reaction Endonucleolytic cleavage to 5'-phosphomonoester.. Functionally, endonuclease that specifically degrades the RNA of RNA-DNA hybrids. The protein is Ribonuclease HII of Synechococcus sp. (strain JA-3-3Ab) (Cyanobacteria bacterium Yellowstone A-Prime).